We begin with the raw amino-acid sequence, 139 residues long: Large-conductance mechanosensitive channel (139 aa).

A run of 2 helical transmembrane segments spans residues 9–29 (AFAV…GAAF) and 79–99 (IQTV…VKAI).

The protein belongs to the MscL family. As to quaternary structure, homopentamer.

The protein localises to the cell inner membrane. Functionally, channel that opens in response to stretch forces in the membrane lipid bilayer. May participate in the regulation of osmotic pressure changes within the cell. The sequence is that of Large-conductance mechanosensitive channel from Pseudomonas putida (strain W619).